We begin with the raw amino-acid sequence, 213 residues long: Pyridoxine/pyridoxamine 5'-phosphate oxidase (213 aa).

Substrate is bound by residues 9-12 (RKSY) and Lys67. Residues 62–67 (RVVLIK), 77–78 (YT), Arg83, and Lys84 contribute to the FMN site. Substrate-binding residues include Tyr124, Arg128, and Ser132. FMN contacts are provided by residues 141-142 (QS) and Trp185. 191 to 193 (RLH) provides a ligand contact to substrate. Arg195 is an FMN binding site.

It belongs to the pyridoxamine 5'-phosphate oxidase family. In terms of assembly, homodimer. FMN serves as cofactor.

The enzyme catalyses pyridoxamine 5'-phosphate + O2 + H2O = pyridoxal 5'-phosphate + H2O2 + NH4(+). It carries out the reaction pyridoxine 5'-phosphate + O2 = pyridoxal 5'-phosphate + H2O2. It participates in cofactor metabolism; pyridoxal 5'-phosphate salvage; pyridoxal 5'-phosphate from pyridoxamine 5'-phosphate: step 1/1. It functions in the pathway cofactor metabolism; pyridoxal 5'-phosphate salvage; pyridoxal 5'-phosphate from pyridoxine 5'-phosphate: step 1/1. Catalyzes the oxidation of either pyridoxine 5'-phosphate (PNP) or pyridoxamine 5'-phosphate (PMP) into pyridoxal 5'-phosphate (PLP). This Methylibium petroleiphilum (strain ATCC BAA-1232 / LMG 22953 / PM1) protein is Pyridoxine/pyridoxamine 5'-phosphate oxidase.